The chain runs to 163 residues: Putative C-type lectin protein FPV239 (163 aa).

One can recognise a C-type lectin domain in the interval 48-159; sequence CKEGWVGYNK…CFLPKKWICR (112 aa). 2 cysteine pairs are disulfide-bonded: C76/C158 and C137/C150.

The protein is Putative C-type lectin protein FPV239 of Fowlpox virus (strain NVSL) (FPV).